The following is a 178-amino-acid chain: Large ribosomal subunit protein uL6 (178 aa).

This sequence belongs to the universal ribosomal protein uL6 family. As to quaternary structure, part of the 50S ribosomal subunit.

In terms of biological role, this protein binds to the 23S rRNA, and is important in its secondary structure. It is located near the subunit interface in the base of the L7/L12 stalk, and near the tRNA binding site of the peptidyltransferase center. This is Large ribosomal subunit protein uL6 from Micrococcus luteus (Micrococcus lysodeikticus).